The chain runs to 424 residues: Hemagglutinin-esterase (424 aa).

Positions 1 to 16 (MFLLPRFVLVSCIIGS) are cleaved as a signal peptide. An esterase domain 1 region spans residues 7-127 (FVLVSCIIGS…SNDIWMQNKG (121 aa)). The Virion surface portion of the chain corresponds to 17–392 (LGFDNPPTNV…PICVYDPLPI (376 aa)). The active-site Nucleophile is the S40. C44 and C65 are oxidised to a cystine. N-linked (GlcNAc...) asparagine; by host glycans are attached at residues N54, N89, N153, N236, and N301. Intrachain disulfides connect C113–C162, C197–C276, and C205–C249. The tract at residues 128-266 (LFYTQVYKNM…GNYLAISNEL (139 aa)) is receptor binding. The segment at 267 to 379 (LLTVPTKAIC…RCPTAADINT (113 aa)) is esterase domain 2. An intrachain disulfide couples C307 to C312. N-linked (GlcNAc...) asparagine; by host glycosylation occurs at N316. Residues D326 and H329 each act as charge relay system in the active site. C347 and C371 form a disulfide bridge. The N-linked (GlcNAc...) asparagine; by host glycan is linked to N358. A helical transmembrane segment spans residues 393-413 (ILLGILLGVAVIIIVVLLLYF). At 414-424 (MVDNGTRLHDA) the chain is on the intravirion side. N417 carries an N-linked (GlcNAc...) asparagine; by host glycan.

This sequence belongs to the influenza type C/coronaviruses hemagglutinin-esterase family. Homodimer; disulfide-linked. Forms a complex with the M protein in the pre-Golgi. Associates then with S-M complex to form a ternary complex S-M-HE. N-glycosylated in the host RER.

The protein localises to the virion membrane. The protein resides in the host cell membrane. It catalyses the reaction N-acetyl-9-O-acetylneuraminate + H2O = N-acetylneuraminate + acetate + H(+). The catalysed reaction is N-acetyl-4-O-acetylneuraminate + H2O = N-acetylneuraminate + acetate + H(+). In terms of biological role, structural protein that makes short spikes at the surface of the virus. Contains receptor binding and receptor-destroying activities. Mediates de-O-acetylation of N-acetyl-4-O-acetylneuraminic acid, which is probably the receptor determinant recognized by the virus on the surface of erythrocytes and susceptible cells. This receptor-destroying activity is important for virus release as it probably helps preventing self-aggregation and ensures the efficient spread of the progeny virus from cell to cell. May serve as a secondary viral attachment protein for initiating infection, the spike protein being the major one. May become a target for both the humoral and the cellular branches of the immune system. In Bovine coronavirus (strain 98TXSF-110-LUN) (BCoV-LUN), this protein is Hemagglutinin-esterase.